The primary structure comprises 196 residues: NADH-quinone oxidoreductase subunit B (196 aa).

[4Fe-4S] cluster-binding residues include Cys75, Cys76, Cys140, and Cys170.

The protein belongs to the complex I 20 kDa subunit family. NDH-1 is composed of 14 different subunits. Subunits NuoB, C, D, E, F, and G constitute the peripheral sector of the complex. It depends on [4Fe-4S] cluster as a cofactor.

It is found in the cell inner membrane. It carries out the reaction a quinone + NADH + 5 H(+)(in) = a quinol + NAD(+) + 4 H(+)(out). In terms of biological role, NDH-1 shuttles electrons from NADH, via FMN and iron-sulfur (Fe-S) centers, to quinones in the respiratory chain. Couples the redox reaction to proton translocation (for every two electrons transferred, four hydrogen ions are translocated across the cytoplasmic membrane), and thus conserves the redox energy in a proton gradient. This is NADH-quinone oxidoreductase subunit B from Caulobacter sp. (strain K31).